A 72-amino-acid chain; its full sequence is uncharacterized protein (72 aa).

Positions 1–22 (MQSNFIFATLLVLLSLLTFTYA) are cleaved as a signal peptide. Over 23-28 (SGSSSM) the chain is Extracellular. The helical transmembrane segment at 29 to 49 (TSSSMPMFGGAIVAAFAFAIF) threads the bilayer. Over 50-72 (SRLAQNFAPRAIFSLLPYHSVSC) the chain is Cytoplasmic.

The protein localises to the membrane. This is an uncharacterized protein from Dictyostelium discoideum (Social amoeba).